The primary structure comprises 374 residues: tRNA-specific 2-thiouridylase MnmA (374 aa).

ATP is bound by residues 17-24 (GMSGGVDS) and Met43. The tract at residues 103–105 (NPD) is interaction with target base in tRNA. Cys108 serves as the catalytic Nucleophile. Cys108 and Cys204 are disulfide-bonded. Gly132 serves as a coordination point for ATP. Residues 154–156 (KDQ) form an interaction with tRNA region. Catalysis depends on Cys204, which acts as the Cysteine persulfide intermediate. Residues 316–317 (RY) are interaction with tRNA.

It belongs to the MnmA/TRMU family.

It localises to the cytoplasm. The catalysed reaction is S-sulfanyl-L-cysteinyl-[protein] + uridine(34) in tRNA + AH2 + ATP = 2-thiouridine(34) in tRNA + L-cysteinyl-[protein] + A + AMP + diphosphate + H(+). Catalyzes the 2-thiolation of uridine at the wobble position (U34) of tRNA, leading to the formation of s(2)U34. In Pseudomonas putida (strain GB-1), this protein is tRNA-specific 2-thiouridylase MnmA.